Here is a 110-residue protein sequence, read N- to C-terminus: Protein SPIRAL1-like 2 (110 aa).

Residues 28 to 110 (AVNKTPAETE…LDYLFGGGSN (83 aa)) form a disordered region. Residues 40 to 52 (AHAPPTQAAAANA) show a composition bias toward low complexity. The span at 63–82 (LNSNSANNYMRAEGQNTGNF) shows a compositional bias: polar residues. Ser-67 is subject to Phosphoserine. A compositionally biased stretch (gly residues) spans 95–110 (PGGGSSLDYLFGGGSN).

This sequence belongs to the SPIRAL1 family. As to expression, ubiquitous.

Its function is as follows. Acts redundantly with SPR1 in maintaining the cortical microtubules organization essential for anisotropic cell growth. In Arabidopsis thaliana (Mouse-ear cress), this protein is Protein SPIRAL1-like 2 (SP1L2).